The primary structure comprises 195 residues: Glycerol-3-phosphate acyltransferase 1 (195 aa).

5 helical membrane-spanning segments follow: residues 6–26, 52–72, 74–94, 117–137, and 168–188; these read VILT…GHFL, LGIA…FLVV, LGLK…AVAG, LAVY…LTFL, and FGLG…ISLF.

This sequence belongs to the PlsY family. Probably interacts with PlsX.

It is found in the cell membrane. It carries out the reaction an acyl phosphate + sn-glycerol 3-phosphate = a 1-acyl-sn-glycero-3-phosphate + phosphate. The protein operates within lipid metabolism; phospholipid metabolism. Functionally, catalyzes the transfer of an acyl group from acyl-phosphate (acyl-PO(4)) to glycerol-3-phosphate (G3P) to form lysophosphatidic acid (LPA). This enzyme utilizes acyl-phosphate as fatty acyl donor, but not acyl-CoA or acyl-ACP. This Moorella thermoacetica (strain ATCC 39073 / JCM 9320) protein is Glycerol-3-phosphate acyltransferase 1.